Here is an 81-residue protein sequence, read N- to C-terminus: Large ribosomal subunit protein bL31B (81 aa).

This sequence belongs to the bacterial ribosomal protein bL31 family. Type B subfamily. In terms of assembly, part of the 50S ribosomal subunit.

In Lactobacillus helveticus (strain DPC 4571), this protein is Large ribosomal subunit protein bL31B.